Here is a 603-residue protein sequence, read N- to C-terminus: Adenine deaminase (603 aa).

Belongs to the metallo-dependent hydrolases superfamily. Adenine deaminase family. Mn(2+) serves as cofactor.

The enzyme catalyses adenine + H2O + H(+) = hypoxanthine + NH4(+). The chain is Adenine deaminase from Ruegeria pomeroyi (strain ATCC 700808 / DSM 15171 / DSS-3) (Silicibacter pomeroyi).